Consider the following 498-residue polypeptide: Transcription factor kayak (498 aa).

Positions Ala-108–Gln-127 are enriched in polar residues. Disordered stretches follow at residues Ala-108–Ser-144 and Gly-177–Val-234. 2 stretches are compositionally biased toward low complexity: residues Thr-135–Ser-144 and Gly-177–Thr-191. Positions Glu-212–His-275 constitute a bZIP domain. Residues Lys-214–Arg-233 form a basic motif region. The interval Leu-240 to Leu-247 is leucine-zipper. Residues Ala-304 to Gly-325 show a composition bias toward low complexity. Disordered regions lie at residues Ala-304–Asp-345 and Thr-465–Leu-498. Polar residues predominate over residues Thr-333–Pro-343. Residue Ser-342 is modified to Phosphoserine.

This sequence belongs to the bZIP family. Fos subfamily. Homodimer. Heterodimer with Jra. The kay-Jra heterodimer binds more stably to the AP-1 site than either of the two proteins alone.

It localises to the nucleus. Its function is as follows. Developmentally regulated transcription factor AP-1 binds and recognizes the enhancer DNA sequence: 5'-TGA[CG]TCA-3'. May play a role in the function or determination of a particular subset of cells in the developing embryo. It is able to carry out its function either independently of or in conjunction with Jra. The sequence is that of Transcription factor kayak from Drosophila simulans (Fruit fly).